Consider the following 186-residue polypeptide: dCTP deaminase (186 aa).

107-112 (KSTYAR) is a dCTP binding site. Residue E133 is the Proton donor/acceptor of the active site. DCTP-binding residues include Q152, Y166, and Q176.

The protein belongs to the dCTP deaminase family. As to quaternary structure, homotrimer.

It carries out the reaction dCTP + H2O + H(+) = dUTP + NH4(+). The protein operates within pyrimidine metabolism; dUMP biosynthesis; dUMP from dCTP (dUTP route): step 1/2. Its function is as follows. Catalyzes the deamination of dCTP to dUTP. In Campylobacter curvus (strain 525.92), this protein is dCTP deaminase.